The primary structure comprises 407 residues: Histone-lysine N-methyltransferase SUV39H2 (407 aa).

Residues 43 to 101 (YEVEYLCDYKVEEGKEYYLVKWKGWPESSNTWEPQKNLKCPKLLENFLSDKDEYLSRMK) enclose the Chromo domain. One can recognise a Pre-SET domain in the interval 185–243 (TGCECSDCPAEKCCPKEAGFILAYNKQKKLKIQPGLPIYECNSFCRCGPDCPNRIVQKG). C187, C189, C192, C197, C198, C225, C229, C231, and C235 together coordinate Zn(2+). Residues 246-369 (YSLCIFRTNN…AGEELTFDYQ (124 aa)) form the SET domain. S-adenosyl-L-methionine contacts are provided by residues 257–259 (RGW), Y300, and 326–327 (NH). Zn(2+)-binding residues include C329, C395, C397, and C402. One can recognise a Post-SET domain in the interval 391–407 (IRTVCKCGAVCCRGYLN).

The protein belongs to the class V-like SAM-binding methyltransferase superfamily. Histone-lysine methyltransferase family. Suvar3-9 subfamily.

The protein resides in the nucleus. Its subcellular location is the chromosome. It is found in the centromere. The enzyme catalyses L-lysyl(9)-[histone H3] + 3 S-adenosyl-L-methionine = N(6),N(6),N(6)-trimethyl-L-lysyl(9)-[histone H3] + 3 S-adenosyl-L-homocysteine + 3 H(+). Functionally, histone methyltransferase that specifically trimethylates 'Lys-9' of histone H3 using monomethylated H3 'Lys-9' as substrate. H3 'Lys-9' trimethylation represents a specific tag for epigenetic transcriptional repression by recruiting HP1 (CBX1, CBX3 and/or CBX5) proteins to methylated histones. Mainly functions in heterochromatin regions, thereby playing a central role in the establishment of constitutive heterochromatin at pericentric and telomere regions. H3 'Lys-9' trimethylation is also required to direct DNA methylation at pericentric repeats. SUV39H1 is targeted to histone H3 via its interaction with RB1 and is involved in many processes. The protein is Histone-lysine N-methyltransferase SUV39H2 (SUV39H2) of Gallus gallus (Chicken).